Here is a 364-residue protein sequence, read N- to C-terminus: Homeobox protein Nkx-2.3 (364 aa).

Residues 132–153 (GDCKAAEESERPKPRSRRKPRV) are disordered. A compositionally biased stretch (basic and acidic residues) spans 135–144 (KAAEESERPK). Residues 148-207 (RRKPRVLFSQAQVFELERRFKQQRYLSAPEREHLASSLKLTSTQVKIWFQNRRYKCKRQR) constitute a DNA-binding region (homeobox).

This sequence belongs to the NK-2 homeobox family.

Its subcellular location is the nucleus. Transcription factor. The polypeptide is Homeobox protein Nkx-2.3 (NKX2-3) (Homo sapiens (Human)).